The chain runs to 271 residues: Thiazole synthase (271 aa).

Lysine 104 serves as the catalytic Schiff-base intermediate with DXP. 1-deoxy-D-xylulose 5-phosphate contacts are provided by residues glycine 165, 192 to 193 (AG), and 214 to 215 (NT).

Belongs to the ThiG family. As to quaternary structure, homotetramer. Forms heterodimers with either ThiH or ThiS.

Its subcellular location is the cytoplasm. It catalyses the reaction [ThiS sulfur-carrier protein]-C-terminal-Gly-aminoethanethioate + 2-iminoacetate + 1-deoxy-D-xylulose 5-phosphate = [ThiS sulfur-carrier protein]-C-terminal Gly-Gly + 2-[(2R,5Z)-2-carboxy-4-methylthiazol-5(2H)-ylidene]ethyl phosphate + 2 H2O + H(+). The protein operates within cofactor biosynthesis; thiamine diphosphate biosynthesis. Functionally, catalyzes the rearrangement of 1-deoxy-D-xylulose 5-phosphate (DXP) to produce the thiazole phosphate moiety of thiamine. Sulfur is provided by the thiocarboxylate moiety of the carrier protein ThiS. In vitro, sulfur can be provided by H(2)S. The protein is Thiazole synthase of Burkholderia lata (strain ATCC 17760 / DSM 23089 / LMG 22485 / NCIMB 9086 / R18194 / 383).